The primary structure comprises 236 residues: Ribonuclease HII (236 aa).

An RNase H type-2 domain is found at 21-214; the sequence is RTVAGVDEVG…LDALPRWQHL (194 aa). Residues aspartate 27, glutamate 28, and aspartate 119 each coordinate a divalent metal cation.

This sequence belongs to the RNase HII family. Mn(2+) is required as a cofactor. Mg(2+) serves as cofactor.

Its subcellular location is the cytoplasm. It catalyses the reaction Endonucleolytic cleavage to 5'-phosphomonoester.. Endonuclease that specifically degrades the RNA of RNA-DNA hybrids. The polypeptide is Ribonuclease HII (Streptomyces griseus subsp. griseus (strain JCM 4626 / CBS 651.72 / NBRC 13350 / KCC S-0626 / ISP 5235)).